The sequence spans 72 residues: Large ribosomal subunit protein bL31c (72 aa).

It belongs to the bacterial ribosomal protein bL31 family. Type A subfamily. In terms of assembly, part of the 50S ribosomal subunit.

The protein localises to the plastid. It is found in the chloroplast. Functionally, binds the 23S rRNA. The protein is Large ribosomal subunit protein bL31c (rpl31) of Thalassiosira pseudonana (Marine diatom).